We begin with the raw amino-acid sequence, 352 residues long: Holliday junction branch migration complex subunit RuvB (352 aa).

The disordered stretch occupies residues 1–42 (MAIVSSSAGRADSQPPAAKSRVVDASPLPEEASPAREDGLRP). Residues 13 to 201 (SQPPAAKSRV…FGLIQRLEFY (189 aa)) form a large ATPase domain (RuvB-L) region. The span at 33–42 (SPAREDGLRP) shows a compositional bias: basic and acidic residues. Positions 40, 41, 82, 85, 86, 87, 191, 201, and 238 each coordinate ATP. Residue threonine 86 participates in Mg(2+) binding. The interval 202 to 273 (GLEDLQAIVE…LVDEALTLHR (72 aa)) is small ATPAse domain (RuvB-S). The segment at 276 to 352 (ARGLDASDRR…RRHLGWPELP (77 aa)) is head domain (RuvB-H). Residues arginine 331 and arginine 336 each coordinate DNA.

This sequence belongs to the RuvB family. As to quaternary structure, homohexamer. Forms an RuvA(8)-RuvB(12)-Holliday junction (HJ) complex. HJ DNA is sandwiched between 2 RuvA tetramers; dsDNA enters through RuvA and exits via RuvB. An RuvB hexamer assembles on each DNA strand where it exits the tetramer. Each RuvB hexamer is contacted by two RuvA subunits (via domain III) on 2 adjacent RuvB subunits; this complex drives branch migration. In the full resolvosome a probable DNA-RuvA(4)-RuvB(12)-RuvC(2) complex forms which resolves the HJ.

The protein resides in the cytoplasm. It catalyses the reaction ATP + H2O = ADP + phosphate + H(+). In terms of biological role, the RuvA-RuvB-RuvC complex processes Holliday junction (HJ) DNA during genetic recombination and DNA repair, while the RuvA-RuvB complex plays an important role in the rescue of blocked DNA replication forks via replication fork reversal (RFR). RuvA specifically binds to HJ cruciform DNA, conferring on it an open structure. The RuvB hexamer acts as an ATP-dependent pump, pulling dsDNA into and through the RuvAB complex. RuvB forms 2 homohexamers on either side of HJ DNA bound by 1 or 2 RuvA tetramers; 4 subunits per hexamer contact DNA at a time. Coordinated motions by a converter formed by DNA-disengaged RuvB subunits stimulates ATP hydrolysis and nucleotide exchange. Immobilization of the converter enables RuvB to convert the ATP-contained energy into a lever motion, pulling 2 nucleotides of DNA out of the RuvA tetramer per ATP hydrolyzed, thus driving DNA branch migration. The RuvB motors rotate together with the DNA substrate, which together with the progressing nucleotide cycle form the mechanistic basis for DNA recombination by continuous HJ branch migration. Branch migration allows RuvC to scan DNA until it finds its consensus sequence, where it cleaves and resolves cruciform DNA. The polypeptide is Holliday junction branch migration complex subunit RuvB (Prochlorococcus marinus (strain MIT 9303)).